Reading from the N-terminus, the 432-residue chain is Succinate--CoA ligase [GDP-forming] subunit beta, mitochondrial (432 aa).

The transit peptide at 1-37 (MASPVAAQAGKLLRALALRPRFLAAGSQAVQLTSRRW) directs the protein to the mitochondrion. In terms of domain architecture, ATP-grasp spans 46 to 274 (KKLMSDNGVR…NAEFRQKDIF (229 aa)). Gln-57 lines the GTP pocket. Lys-73 carries the N6-acetyllysine modification. An N6-succinyllysine modification is found at Lys-78. 90–92 (GRG) lines the GTP pocket. 2 positions are modified to N6-acetyllysine: Lys-132 and Lys-139. Leu-146 lines the GTP pocket. Ser-161 is modified (phosphoserine). N6-acetyllysine occurs at positions 200, 218, and 227. Mg(2+) contacts are provided by Asn-243 and Asp-257. N6-acetyllysine is present on residues Lys-271 and Lys-291. Asn-308 contributes to the substrate binding site. The residue at position 338 (Lys-338) is an N6-succinyllysine. Lys-347 is modified (N6-acetyllysine). A substrate-binding site is contributed by 365 to 367 (GIV). N6-acetyllysine is present on residues Lys-386 and Lys-423.

It belongs to the succinate/malate CoA ligase beta subunit family. GTP-specific subunit beta subfamily. In terms of assembly, heterodimer of an alpha and a beta subunit. The beta subunit determines specificity for GTP. It depends on Mg(2+) as a cofactor. In terms of tissue distribution, mainly expressed in liver, kidney, heart, spleen and skeletal muscle. Also found in intestine and colon, and in low amounts in lung, brain, prostate, testis and ovary.

It localises to the mitochondrion. The catalysed reaction is GTP + succinate + CoA = succinyl-CoA + GDP + phosphate. The protein operates within carbohydrate metabolism; tricarboxylic acid cycle; succinate from succinyl-CoA (ligase route): step 1/1. In terms of biological role, GTP-specific succinyl-CoA synthetase functions in the citric acid cycle (TCA), coupling the hydrolysis of succinyl-CoA to the synthesis of GTP and thus represents the only step of substrate-level phosphorylation in the TCA. The beta subunit provides nucleotide specificity of the enzyme and binds the substrate succinate, while the binding sites for coenzyme A and phosphate are found in the alpha subunit. This is Succinate--CoA ligase [GDP-forming] subunit beta, mitochondrial from Homo sapiens (Human).